A 464-amino-acid polypeptide reads, in one-letter code: Argininosuccinate lyase (464 aa).

This sequence belongs to the lyase 1 family. Argininosuccinate lyase subfamily.

The protein resides in the cytoplasm. The enzyme catalyses 2-(N(omega)-L-arginino)succinate = fumarate + L-arginine. The protein operates within amino-acid biosynthesis; L-arginine biosynthesis; L-arginine from L-ornithine and carbamoyl phosphate: step 3/3. The polypeptide is Argininosuccinate lyase (Koribacter versatilis (strain Ellin345)).